The primary structure comprises 407 residues: tRNA pseudouridine synthase 4 (407 aa).

Residues 83 to 105 form a disordered region; the sequence is FRPAPPHPNDRNRRRRKSNRLPD. The Nucleophile role is filled by D115. Residues 274-298 are disordered; that stretch reads TEQDINPQDGDEKINAKSPTTNSVT. At S291 the chain carries Phosphoserine. At T293 the chain carries Phosphothreonine. The residue at position 296 (S296) is a Phosphoserine. T406 carries the phosphothreonine modification.

The protein belongs to the pseudouridine synthase TruB family.

The protein localises to the nucleus. The protein resides in the mitochondrion. The catalysed reaction is uridine(55) in tRNA = pseudouridine(55) in tRNA. It catalyses the reaction a uridine in mRNA = a pseudouridine in mRNA. In terms of biological role, responsible for synthesis of pseudouridine from uracil-55 in the psi GC loop of transfer RNAs. Also catalyzes pseudouridylation of mRNAs with the consensus sequence 5'-GGUUCRA-3'. This Schizosaccharomyces pombe (strain 972 / ATCC 24843) (Fission yeast) protein is tRNA pseudouridine synthase 4.